A 284-amino-acid chain; its full sequence is L-ribulose-5-phosphate 3-epimerase UlaE (284 aa).

The protein belongs to the L-ribulose-5-phosphate 3-epimerase family.

It catalyses the reaction L-ribulose 5-phosphate = L-xylulose 5-phosphate. The protein operates within cofactor degradation; L-ascorbate degradation; D-xylulose 5-phosphate from L-ascorbate: step 3/4. In terms of biological role, catalyzes the isomerization of L-xylulose-5-phosphate to L-ribulose-5-phosphate. Is involved in the anaerobic L-ascorbate utilization. The polypeptide is L-ribulose-5-phosphate 3-epimerase UlaE (Salmonella heidelberg (strain SL476)).